Reading from the N-terminus, the 486-residue chain is Serralysin (486 aa).

Residue His-187 coordinates Zn(2+). The active site involves Glu-188. Residues His-191 and His-197 each coordinate Zn(2+). Arg-266, Asp-269, Asp-298, Gly-300, Gly-301, Asp-303, Thr-340, and Glu-342 together coordinate Ca(2+). 2 Hemolysin-type calcium-binding repeats span residues 345-362 (IGGSGNDVLIGNDAANTL) and 363-380 (KGGAGDDIIYGGLGADNL).

It belongs to the peptidase M10B family. Zn(2+) serves as cofactor. Requires Ca(2+) as cofactor.

It localises to the secreted. It catalyses the reaction Preferential cleavage of bonds with hydrophobic residues in P1'.. The protein is Serralysin (prtA1) of Photorhabdus luminescens (Xenorhabdus luminescens).